Consider the following 175-residue polypeptide: Peptide deformylase (175 aa).

Cys99 and His141 together coordinate Fe cation. Residue Glu142 is part of the active site. A Fe cation-binding site is contributed by His145.

The protein belongs to the polypeptide deformylase family. Requires Fe(2+) as cofactor.

It carries out the reaction N-terminal N-formyl-L-methionyl-[peptide] + H2O = N-terminal L-methionyl-[peptide] + formate. Removes the formyl group from the N-terminal Met of newly synthesized proteins. Requires at least a dipeptide for an efficient rate of reaction. N-terminal L-methionine is a prerequisite for activity but the enzyme has broad specificity at other positions. The chain is Peptide deformylase from Rickettsia akari (strain Hartford).